The chain runs to 404 residues: Probable tRNA sulfurtransferase (404 aa).

Residues 60–165 form the THUMP domain; sequence QPIVEALKLV…DEAAYISYEE (106 aa). Residues 183 to 184, 208 to 209, Arg-265, Gly-287, and Gln-296 each bind ATP; these read ML and HF.

The protein belongs to the ThiI family.

It localises to the cytoplasm. The enzyme catalyses [ThiI sulfur-carrier protein]-S-sulfanyl-L-cysteine + a uridine in tRNA + 2 reduced [2Fe-2S]-[ferredoxin] + ATP + H(+) = [ThiI sulfur-carrier protein]-L-cysteine + a 4-thiouridine in tRNA + 2 oxidized [2Fe-2S]-[ferredoxin] + AMP + diphosphate. The catalysed reaction is [ThiS sulfur-carrier protein]-C-terminal Gly-Gly-AMP + S-sulfanyl-L-cysteinyl-[cysteine desulfurase] + AH2 = [ThiS sulfur-carrier protein]-C-terminal-Gly-aminoethanethioate + L-cysteinyl-[cysteine desulfurase] + A + AMP + 2 H(+). It functions in the pathway cofactor biosynthesis; thiamine diphosphate biosynthesis. Its function is as follows. Catalyzes the ATP-dependent transfer of a sulfur to tRNA to produce 4-thiouridine in position 8 of tRNAs, which functions as a near-UV photosensor. Also catalyzes the transfer of sulfur to the sulfur carrier protein ThiS, forming ThiS-thiocarboxylate. This is a step in the synthesis of thiazole, in the thiamine biosynthesis pathway. The sulfur is donated as persulfide by IscS. In Streptococcus pyogenes serotype M3 (strain ATCC BAA-595 / MGAS315), this protein is Probable tRNA sulfurtransferase.